The following is a 500-amino-acid chain: Lysine--tRNA ligase (500 aa).

Mg(2+) contacts are provided by Glu-411 and Glu-418.

This sequence belongs to the class-II aminoacyl-tRNA synthetase family. As to quaternary structure, homodimer. Requires Mg(2+) as cofactor.

Its subcellular location is the cytoplasm. The enzyme catalyses tRNA(Lys) + L-lysine + ATP = L-lysyl-tRNA(Lys) + AMP + diphosphate. The sequence is that of Lysine--tRNA ligase from Actinobacillus pleuropneumoniae serotype 5b (strain L20).